The primary structure comprises 550 residues: Epidermal growth factor-like protein 6 (550 aa).

The N-terminal stretch at 1 to 18 is a signal peptide; sequence MQPPWGLALPLLLPWVTG. The EGF-like 1 domain occupies 55-90; sequence NKGVCEAMCEPRCKFGECVGPNKCRCFPGYTGKTCT. 6 disulfide bridges follow: Cys-59/Cys-72, Cys-63/Cys-78, Cys-80/Cys-89, Cys-96/Cys-107, Cys-103/Cys-116, and Cys-118/Cys-130. The 40-residue stretch at 92-131 folds into the EGF-like 2; calcium-binding domain; that stretch reads DVNECGVKPRPCQHRCVNTHGSYKCFCLSGHMLLPDATCS. The 37-residue stretch at 135 to 171 folds into the EGF-like 3 domain; sequence TCARLNCQYGCEDTEEGPRCVCPSSGLRLGPNGRVCL. One can recognise an EGF-like 4; calcium-binding domain in the interval 172-210; sequence DIDECASSKAVCPSNRRCVNTFGSYYCKCHIGFELKYIG. 5 disulfides stabilise this stretch: Cys-176–Cys-189, Cys-183–Cys-198, Cys-221–Cys-234, Cys-228–Cys-243, and Cys-245–Cys-256. In terms of domain architecture, EGF-like 5; calcium-binding spans 217-257; it reads DINECALNTHPCSPHANCLNTRGSFKCKCKQGYRGNGLQCS. The disordered stretch occupies residues 295–354; sequence KMVTPRPASTRVPKVNLPYSSEEGVSRGRNYDGEQKKKEEGKRERLEEEKGEKTLRNEVE. Residues 318–354 show a composition bias toward basic and acidic residues; the sequence is GVSRGRNYDGEQKKKEEGKRERLEEEKGEKTLRNEVE. A coiled-coil region spans residues 327-357; the sequence is GEQKKKEEGKRERLEEEKGEKTLRNEVEQER. Asn-394 carries an N-linked (GlcNAc...) asparagine glycan. Positions 397-543 constitute an MAM domain; sequence VDCSFDLGVC…VLLVSGLCPD (147 aa).

Belongs to the nephronectin family. As to expression, expressed at basement membrane of pelage follicles (at protein level).

It localises to the secreted. It is found in the extracellular space. The protein resides in the extracellular matrix. The protein localises to the basement membrane. Functionally, may bind integrin alpha-8/beta-1 and play a role in hair follicle morphogenesis. Promotes matrix assembly. This chain is Epidermal growth factor-like protein 6 (Egfl6), found in Mus musculus (Mouse).